The sequence spans 239 residues: Large ribosomal subunit protein uL1 (239 aa).

Belongs to the universal ribosomal protein uL1 family. As to quaternary structure, part of the 50S ribosomal subunit.

Its function is as follows. Binds directly to 23S rRNA. The L1 stalk is quite mobile in the ribosome, and is involved in E site tRNA release. Functionally, protein L1 is also a translational repressor protein, it controls the translation of the L11 operon by binding to its mRNA. This Rickettsia bellii (strain OSU 85-389) protein is Large ribosomal subunit protein uL1.